We begin with the raw amino-acid sequence, 207 residues long: Guanylate kinase (207 aa).

The Guanylate kinase-like domain maps to Gly-5–Arg-184. Residue Ala-12–Ser-19 participates in ATP binding.

Belongs to the guanylate kinase family.

It is found in the cytoplasm. It carries out the reaction GMP + ATP = GDP + ADP. Essential for recycling GMP and indirectly, cGMP. This is Guanylate kinase from Shewanella violacea (strain JCM 10179 / CIP 106290 / LMG 19151 / DSS12).